The primary structure comprises 100 residues: Small ribosomal subunit protein uS14c (100 aa).

It belongs to the universal ribosomal protein uS14 family. Part of the 30S ribosomal subunit.

It localises to the plastid. The protein localises to the chloroplast. Functionally, binds 16S rRNA, required for the assembly of 30S particles. This Liriodendron tulipifera (Tuliptree) protein is Small ribosomal subunit protein uS14c.